Consider the following 105-residue polypeptide: Putative RNA-binding protein RbpF (105 aa).

In terms of domain architecture, RRM spans 2 to 79 (SIYVGNLSYE…RDLKVNKAKP (78 aa)). Residues 75–84 (NKAKPKEDRG) are compositionally biased toward basic and acidic residues. The interval 75–105 (NKAKPKEDRGSFGGGNRGGYGGGGGGGRSRY) is disordered. Residues 85–105 (SFGGGNRGGYGGGGGGGRSRY) show a composition bias toward gly residues.

This Nostoc sp. (strain PCC 7120 / SAG 25.82 / UTEX 2576) protein is Putative RNA-binding protein RbpF (rbpF).